Here is a 141-residue protein sequence, read N- to C-terminus: HTH-type transcriptional repressor NsrR (141 aa).

The HTH rrf2-type domain occupies 2–129 (QLTSFTDYGL…DNYTLADLVE (128 aa)). A DNA-binding region (H-T-H motif) is located at residues 28-51 (ISEVTDVYGVSRNHMVKIINQLSR). [2Fe-2S] cluster-binding residues include cysteine 91, cysteine 96, and cysteine 102.

[2Fe-2S] cluster serves as cofactor.

Its function is as follows. Nitric oxide-sensitive repressor of genes involved in protecting the cell against nitrosative stress. May require iron for activity. The protein is HTH-type transcriptional repressor NsrR of Escherichia coli O157:H7 (strain EC4115 / EHEC).